The following is a 526-amino-acid chain: tRNA-2-methylthio-N(6)-dimethylallyladenosine synthase (526 aa).

Positions 14 to 130 constitute an MTTase N-terminal domain; it reads RTYQVRTYGC…LPTLLERARH (117 aa). 6 residues coordinate [4Fe-4S] cluster: Cys-23, Cys-59, Cys-93, Cys-167, Cys-171, and Cys-174. In terms of domain architecture, Radical SAM core spans 153-401; that stretch reads RESAYAGWVS…IELQERISLE (249 aa). The TRAM domain occupies 404 to 483; sequence QAQVGRTLEL…PHHLIADGAL (80 aa).

It belongs to the methylthiotransferase family. MiaB subfamily. As to quaternary structure, monomer. [4Fe-4S] cluster serves as cofactor.

It localises to the cytoplasm. The enzyme catalyses N(6)-dimethylallyladenosine(37) in tRNA + (sulfur carrier)-SH + AH2 + 2 S-adenosyl-L-methionine = 2-methylsulfanyl-N(6)-dimethylallyladenosine(37) in tRNA + (sulfur carrier)-H + 5'-deoxyadenosine + L-methionine + A + S-adenosyl-L-homocysteine + 2 H(+). Functionally, catalyzes the methylthiolation of N6-(dimethylallyl)adenosine (i(6)A), leading to the formation of 2-methylthio-N6-(dimethylallyl)adenosine (ms(2)i(6)A) at position 37 in tRNAs that read codons beginning with uridine. In Mycobacterium sp. (strain JLS), this protein is tRNA-2-methylthio-N(6)-dimethylallyladenosine synthase.